The following is a 116-amino-acid chain: Small ribosomal subunit protein uS13 (116 aa).

Positions 92–116 (RRGLPVRGQNTKNNARTRKGAKRSR) are disordered. Positions 106–116 (ARTRKGAKRSR) are enriched in basic residues.

This sequence belongs to the universal ribosomal protein uS13 family. In terms of assembly, part of the 30S ribosomal subunit. Forms a loose heterodimer with protein S19. Forms two bridges to the 50S subunit in the 70S ribosome.

Functionally, located at the top of the head of the 30S subunit, it contacts several helices of the 16S rRNA. In the 70S ribosome it contacts the 23S rRNA (bridge B1a) and protein L5 of the 50S subunit (bridge B1b), connecting the 2 subunits; these bridges are implicated in subunit movement. Contacts the tRNAs in the A and P-sites. In Lactobacillus delbrueckii subsp. bulgaricus (strain ATCC 11842 / DSM 20081 / BCRC 10696 / JCM 1002 / NBRC 13953 / NCIMB 11778 / NCTC 12712 / WDCM 00102 / Lb 14), this protein is Small ribosomal subunit protein uS13.